Consider the following 253-residue polypeptide: Geranylgeranylglyceryl phosphate synthase (253 aa).

The Mg(2+) site is built by D23 and S52. Sn-glycerol 1-phosphate is bound by residues 171 to 177 (YFEAGSG), 202 to 203 (GG), and 224 to 225 (GT).

The protein belongs to the GGGP/HepGP synthase family. Group II subfamily. Homodimer. Mg(2+) serves as cofactor.

It is found in the cytoplasm. It carries out the reaction sn-glycerol 1-phosphate + (2E,6E,10E)-geranylgeranyl diphosphate = sn-3-O-(geranylgeranyl)glycerol 1-phosphate + diphosphate. The protein operates within membrane lipid metabolism; glycerophospholipid metabolism. Inhibited by high concentrations of magnesium (&gt;10 mM) and by EDTA in vitro. Prenyltransferase that catalyzes the transfer of the geranylgeranyl moiety of geranylgeranyl diphosphate (GGPP) to the C3 hydroxyl of sn-glycerol-1-phosphate (G1P). This reaction is the first ether-bond-formation step in the biosynthesis of archaeal membrane lipids. Cannot use sn-glycerol-3-phosphate (G3P) as substrate. The protein is Geranylgeranylglyceryl phosphate synthase of Thermoplasma acidophilum (strain ATCC 25905 / DSM 1728 / JCM 9062 / NBRC 15155 / AMRC-C165).